The sequence spans 658 residues: Threonine--tRNA ligase (658 aa).

Positions 1–64 (MSNTVSLQFP…GASGKVEIIT (64 aa)) constitute a TGS domain. Positions 246–548 (DHRRLGREMD…LIENFAGHMP (303 aa)) are catalytic. Zn(2+) is bound by residues C343, H394, and H525.

The protein belongs to the class-II aminoacyl-tRNA synthetase family. As to quaternary structure, homodimer. Zn(2+) serves as cofactor.

Its subcellular location is the cytoplasm. The enzyme catalyses tRNA(Thr) + L-threonine + ATP = L-threonyl-tRNA(Thr) + AMP + diphosphate + H(+). Its function is as follows. Catalyzes the attachment of threonine to tRNA(Thr) in a two-step reaction: L-threonine is first activated by ATP to form Thr-AMP and then transferred to the acceptor end of tRNA(Thr). Also edits incorrectly charged L-seryl-tRNA(Thr). The protein is Threonine--tRNA ligase of Brucella melitensis biotype 1 (strain ATCC 23456 / CCUG 17765 / NCTC 10094 / 16M).